We begin with the raw amino-acid sequence, 661 residues long: tRNA uridine 5-carboxymethylaminomethyl modification enzyme MnmG (661 aa).

13 to 18 serves as a coordination point for FAD; sequence GGGHAG. 285-299 provides a ligand contact to NAD(+); it reads GPRYCPSVEDKINRF.

It belongs to the MnmG family. Homodimer. Heterotetramer of two MnmE and two MnmG subunits. Requires FAD as cofactor.

Its subcellular location is the cytoplasm. Its function is as follows. NAD-binding protein involved in the addition of a carboxymethylaminomethyl (cmnm) group at the wobble position (U34) of certain tRNAs, forming tRNA-cmnm(5)s(2)U34. The polypeptide is tRNA uridine 5-carboxymethylaminomethyl modification enzyme MnmG (Acidovorax sp. (strain JS42)).